The chain runs to 250 residues: Phosphoribosylaminoimidazole-succinocarboxamide synthase (250 aa).

It belongs to the SAICAR synthetase family.

It carries out the reaction 5-amino-1-(5-phospho-D-ribosyl)imidazole-4-carboxylate + L-aspartate + ATP = (2S)-2-[5-amino-1-(5-phospho-beta-D-ribosyl)imidazole-4-carboxamido]succinate + ADP + phosphate + 2 H(+). The protein operates within purine metabolism; IMP biosynthesis via de novo pathway; 5-amino-1-(5-phospho-D-ribosyl)imidazole-4-carboxamide from 5-amino-1-(5-phospho-D-ribosyl)imidazole-4-carboxylate: step 1/2. The protein is Phosphoribosylaminoimidazole-succinocarboxamide synthase of Picosynechococcus sp. (strain ATCC 27264 / PCC 7002 / PR-6) (Agmenellum quadruplicatum).